Here is a 96-residue protein sequence, read N- to C-terminus: Large ribosomal subunit protein eL43 (96 aa).

The segment at 39–60 (CTFCGKTATKRTCVGIWKCKKC) adopts a C4-type zinc-finger fold.

The protein belongs to the eukaryotic ribosomal protein eL43 family. In terms of assembly, component of the large ribosomal subunit. Mature ribosomes consist of a small (40S) and a large (60S) subunit. The 40S subunit contains about 32 different proteins and 1 molecule of RNA (18S). The 60S subunit contains about 42 different proteins and 3 molecules of RNA (28S, 5.8S and 5S).

It is found in the cytoplasm. Component of the ribosome, a large ribonucleoprotein complex responsible for the synthesis of proteins in the cell. The small ribosomal subunit (SSU) binds messenger RNAs (mRNAs) and translates the encoded message by selecting cognate aminoacyl-transfer RNA (tRNA) molecules. The large subunit (LSU) contains the ribosomal catalytic site termed the peptidyl transferase center (PTC), which catalyzes the formation of peptide bonds, thereby polymerizing the amino acids delivered by tRNAs into a polypeptide chain. The nascent polypeptides leave the ribosome through a tunnel in the LSU and interact with protein factors that function in enzymatic processing, targeting, and the membrane insertion of nascent chains at the exit of the ribosomal tunnel. The polypeptide is Large ribosomal subunit protein eL43 (Plasmodium falciparum (isolate 3D7)).